The primary structure comprises 501 residues: Nuclear receptor subfamily 5 group A member 2 (501 aa).

The segment at residues 43-114 (EELCPVCGDK…KCLSVGMKLE (72 aa)) is a DNA-binding region (nuclear receptor). Positions 46, 49, 63, 66, 82, 88, 98, and 101 each coordinate Zn(2+). NR C4-type zinc fingers lie at residues 46–66 (CPVC…CESC) and 82–106 (CIEN…FQKC). The tract at residues 112–127 (KLEAVRADRMRGGRNK) is C-terminal extension (CTE). Positions 128-147 (FGPMYKRDRALKQQKKALIR) match the FTZ-F1 box motif. The interval 186 to 207 (NHTALPPTDYDRSPFVTSPISM) is disordered. The region spanning 260–499 (SIPHLILELQ…NLLIEMLHAK (240 aa)) is the NR LBD domain. Residues 381-384 (GATL), Tyr476, and Lys480 each bind a phospholipid derivative. An AF-2 region spans residues 488-499 (CNNLLIEMLHAK).

The protein belongs to the nuclear hormone receptor family. NR5 subfamily. Monomer; Binds DNA as a monomer. Detected in liver and adrenal gland.

The protein localises to the nucleus. It is found in the chromosome. Its function is as follows. Orphan nuclear receptor that binds DNA as a monomer to the 5'-TCAAGGCCA-3' sequence and controls expression of target genes: regulates key biological processes, such as cholesterol and bile acid synthesis pathways, as well as cartilage, liver and pancreas morphogenesis. Ligand-binding causes conformational change which causes recruitment of coactivators, promoting target gene activation. The specific ligand is unknown, but specific phospholipids, such as phosphatidylethanolamine, phosphatidylserine, dilauroyl phosphatidylcholine and diundecanoyl phosphatidylcholine can act as ligand in vitro. Acts as a pioneer transcription factor, which unwraps target DNA from histones and elicits local opening of closed chromatin. Involved in the formation of connective tissue in lower jaw. The chain is Nuclear receptor subfamily 5 group A member 2 from Gallus gallus (Chicken).